A 713-amino-acid chain; its full sequence is Polyphosphate kinase (713 aa).

Asparagine 63 provides a ligand contact to ATP. Residues arginine 394 and arginine 424 each coordinate Mg(2+). Residue histidine 454 is the Phosphohistidine intermediate of the active site. Residues tyrosine 487, arginine 583, and histidine 611 each coordinate ATP.

It belongs to the polyphosphate kinase 1 (PPK1) family. Requires Mg(2+) as cofactor. An intermediate of this reaction is the autophosphorylated ppk in which a phosphate is covalently linked to a histidine residue through a N-P bond.

It carries out the reaction [phosphate](n) + ATP = [phosphate](n+1) + ADP. Its function is as follows. Catalyzes the reversible transfer of the terminal phosphate of ATP to form a long-chain polyphosphate (polyP). The chain is Polyphosphate kinase from Prosthecochloris aestuarii (strain DSM 271 / SK 413).